We begin with the raw amino-acid sequence, 2517 residues long: Serine/threonine-protein kinase ATR (2517 aa).

Residues 1178 to 1214 form an HEAT repeat; that stretch reads EPMLEQIVNVLMAGCQHDDSQLQMASAKCLGELGAID. In terms of domain architecture, FAT spans 1509–2066; the sequence is LVSRASYNCG…LWMLLPHFKS (558 aa). Position 1569 is a phosphoserine (serine 1569). A Phosphotyrosine modification is found at tyrosine 1570. Serine 1573 is subject to Phosphoserine. Threonine 1575 carries the post-translational modification Phosphothreonine. Residues 2184–2508 form the PI3K/PI4K catalytic domain; sequence FQESVLILRS…EATKVDNLAS (325 aa). Positions 2190-2196 are G-loop; it reads ILRSAAK. Positions 2360 to 2368 are catalytic loop; sequence GLGDRHGEN. The interval 2380–2404 is activation loop; the sequence is HVDFNCLFNQGELLPYPEVVPFRLT. The FATC domain maps to 2485 to 2517; the sequence is IPLSTEGQVNFLINEATKVDNLASMYIGWGAFL.

The protein belongs to the PI3/PI4-kinase family. ATM subfamily. As to quaternary structure, interacts with mus304. Mn(2+) serves as cofactor.

The protein resides in the nucleus. It carries out the reaction L-seryl-[protein] + ATP = O-phospho-L-seryl-[protein] + ADP + H(+). The catalysed reaction is L-threonyl-[protein] + ATP = O-phospho-L-threonyl-[protein] + ADP + H(+). Functionally, serine/threonine protein kinase which activates checkpoint signaling upon genotoxic stresses such as ionizing radiation (IR), ultraviolet light (UV), or DNA replication stalling, thereby acting as a DNA damage sensor. Recognizes the substrate consensus sequence [ST]-Q. Phosphorylates various proteins, which collectively inhibits DNA replication and mitosis and promotes DNA repair and recombination. Phosphorylates grp/CHK1. Phosphorylates 'Ser-137' of histone variant H2AX/H2AV at sites of DNA damage, thereby regulating DNA damage response mechanism. Essential for the DNA damage checkpoint in larval imaginal disks and neuroblasts and for the DNA replication checkpoint in the embryo. Also has an essential role during early nuclear divisions in embryos, where it is required to delay mitosis in response to incomplete DNA replication. Also plays an important role during meiosis, where it may monitor double-strand-break repair during meiotic crossing over, to regulate the progression of prophase I, and to enforce metaphase I delay observed at the end of oogenesis. Involved in telomere maintenance and prevention of telomere fusion; potentially functioning downstream of moi/modigliani. The sequence is that of Serine/threonine-protein kinase ATR (mei-41) from Drosophila melanogaster (Fruit fly).